Consider the following 452-residue polypeptide: Peptidase M20 domain-containing protein SMAC_03666.2 (452 aa).

The N-terminal stretch at 1–28 is a signal peptide; it reads MKATSNLLLLWGTSLLSPSSAFVIDNHH. Residue Asn140 is glycosylated (N-linked (GlcNAc...) asparagine). Asp186 contacts Zn(2+). Glu220 serves as the catalytic Proton acceptor. Residue Glu221 participates in Zn(2+) binding. Asn315 carries an N-linked (GlcNAc...) asparagine glycan.

The protein belongs to the peptidase M20A family. It depends on Zn(2+) as a cofactor.

It localises to the secreted. The chain is Peptidase M20 domain-containing protein SMAC_03666.2 from Sordaria macrospora (strain ATCC MYA-333 / DSM 997 / K(L3346) / K-hell).